Consider the following 111-residue polypeptide: Nascent polypeptide-associated complex protein (111 aa).

Positions 3 to 72 (GMNPRQMKKL…EEVREVLEIS (70 aa)) constitute an NAC-A/B domain.

This sequence belongs to the NAC-alpha family. Homodimer. Interacts with the ribosome. Binds ribosomal RNA.

Its function is as follows. Contacts the emerging nascent chain on the ribosome. The polypeptide is Nascent polypeptide-associated complex protein (Thermococcus kodakarensis (strain ATCC BAA-918 / JCM 12380 / KOD1) (Pyrococcus kodakaraensis (strain KOD1))).